The following is a 267-amino-acid chain: Glutamate racemase (267 aa).

Substrate is bound by residues 13 to 14 and 45 to 46; these read DS and YG. Catalysis depends on C77, which acts as the Proton donor/acceptor. Position 78 to 79 (78 to 79) interacts with substrate; it reads NT. C192 acts as the Proton donor/acceptor in catalysis. 193-194 provides a ligand contact to substrate; that stretch reads TH.

It belongs to the aspartate/glutamate racemases family.

It catalyses the reaction L-glutamate = D-glutamate. Its pathway is cell wall biogenesis; peptidoglycan biosynthesis. Provides the (R)-glutamate required for cell wall biosynthesis. This chain is Glutamate racemase, found in Sinorhizobium fredii (strain NBRC 101917 / NGR234).